The primary structure comprises 393 residues: Putative odorant receptor 69a, isoform B (393 aa).

Topologically, residues 1-39 (MQLEDFMRYPDLVCQAAQLPRYTWNGRRSLEVKRNLAKR) are cytoplasmic. A helical transmembrane segment spans residues 40-60 (IIFWLGAVNLVYHNIGCVMYG). Residues 61–69 (YFGDGRTKD) lie on the Extracellular side of the membrane. A helical transmembrane segment spans residues 70 to 90 (PIAYLAELASVASMLGFTIVG). Topologically, residues 91-138 (TLNLWKMLSLKTHFENLLNEFEELFQLIKHRAYRIHHYQEKYTRHIRN) are cytoplasmic. The chain crosses the membrane as a helical span at residues 139–159 (TFIFHTSAVVYYNSLPILLMI). At 160–208 (REHFSNSQQLGYRIQSNTWYPWQVQGSIPGFFAAVACQIFSCQTNMCVN) the chain is on the extracellular side. The helical transmembrane segment at 209-229 (MFIQFLINFFGIQLEIHFDGL) threads the bilayer. Topologically, residues 230 to 269 (ARQLETIDARNPHAKDQLKYLIVYHTKLLNLADRVNRSFN) are cytoplasmic. Residues 270-290 (FTFLISLSVSMISNCFLAFSM) form a helical membrane-spanning segment. The Extracellular portion of the chain corresponds to 291 to 305 (TMFDFGTSLKHLLGL). The chain crosses the membrane as a helical span at residues 306–326 (LLFITYNFSMCRSGTHLILTS). Residues 327-365 (GKVLPAAFYNNWYEGDLVYRRMLLILMMRATKPYMWKTY) lie on the Cytoplasmic side of the membrane. The chain crosses the membrane as a helical span at residues 366 to 386 (KLAPVSITTYMATLKFSYQMF). At 387-393 (TCVRSLK) the chain is on the extracellular side.

It belongs to the insect chemoreceptor superfamily. Heteromeric odorant receptor channel (TC 1.A.69) family. Or49a subfamily. As to quaternary structure, interacts with Orco. Complexes exist early in the endomembrane system in olfactory sensory neurons (OSNs), coupling these complexes to the conserved ciliary trafficking pathway. Expressed in olfactory sensory neurons in the antenna.

It is found in the cell membrane. In terms of biological role, odorant receptor which mediates acceptance or avoidance behavior, depending on its substrates. The odorant receptor repertoire encodes a large collection of odor stimuli that vary widely in identity, intensity, and duration. May form a complex with Orco to form odorant-sensing units, providing sensitive and prolonged odorant signaling and calcium permeability. The sequence is that of Putative odorant receptor 69a, isoform B (Or69a) from Drosophila melanogaster (Fruit fly).